Reading from the N-terminus, the 553-residue chain is uncharacterized protein (553 aa).

This is an uncharacterized protein from Rickettsia prowazekii (strain Madrid E).